Here is a 122-residue protein sequence, read N- to C-terminus: uncharacterized protein (122 aa).

Disordered stretches follow at residues 1–30 (MGRE…DQPE) and 96–122 (FKSC…DAMG).

This is an uncharacterized protein from Homo sapiens (Human).